The following is a 213-amino-acid chain: Small ribosomal subunit protein eS6 (213 aa).

It belongs to the eukaryotic ribosomal protein eS6 family.

The chain is Small ribosomal subunit protein eS6 from Sulfolobus acidocaldarius (strain ATCC 33909 / DSM 639 / JCM 8929 / NBRC 15157 / NCIMB 11770).